The sequence spans 162 residues: Transcriptional repressor NrdR (162 aa).

The segment at 1-21 is disordered; sequence MNCPDCGNGRTRVIDTGASSD. The segment at 3–34 is a zinc-finger region; it reads CPDCGNGRTRVIDTGASSDGASVRRRRECQRC. Residues 49–139 enclose the ATP-cone domain; it reads LQVKKRDGTI…VYKAFSEPQE (91 aa).

The protein belongs to the NrdR family. Zn(2+) is required as a cofactor.

In terms of biological role, negatively regulates transcription of bacterial ribonucleotide reductase nrd genes and operons by binding to NrdR-boxes. The polypeptide is Transcriptional repressor NrdR (Natronomonas pharaonis (strain ATCC 35678 / DSM 2160 / CIP 103997 / JCM 8858 / NBRC 14720 / NCIMB 2260 / Gabara) (Halobacterium pharaonis)).